We begin with the raw amino-acid sequence, 184 residues long: Ribosome-recycling factor (184 aa).

Belongs to the RRF family.

The protein resides in the cytoplasm. Responsible for the release of ribosomes from messenger RNA at the termination of protein biosynthesis. May increase the efficiency of translation by recycling ribosomes from one round of translation to another. In Fervidobacterium nodosum (strain ATCC 35602 / DSM 5306 / Rt17-B1), this protein is Ribosome-recycling factor.